Consider the following 232-residue polypeptide: uncharacterized protein (232 aa).

One can recognise an Autotransporter domain in the interval 1–232; it reads MIIKKSGGRW…LYTMGVSARF (232 aa).

This is an uncharacterized protein from Escherichia coli (strain K12).